The primary structure comprises 417 residues: Dihydroorotase (417 aa).

Zn(2+) contacts are provided by His60 and His62. Residues 62-64 and Asn94 contribute to the substrate site; that span reads HLR. Zn(2+)-binding residues include Lys138, His167, His207, and Asp275. Lys138 is subject to N6-carboxylysine. The active site involves Asp275. Substrate-binding positions include His279 and 289–290; that span reads AG.

The protein belongs to the metallo-dependent hydrolases superfamily. DHOase family. Class I DHOase subfamily. Zn(2+) is required as a cofactor.

It catalyses the reaction (S)-dihydroorotate + H2O = N-carbamoyl-L-aspartate + H(+). It participates in pyrimidine metabolism; UMP biosynthesis via de novo pathway; (S)-dihydroorotate from bicarbonate: step 3/3. In terms of biological role, catalyzes the reversible cyclization of carbamoyl aspartate to dihydroorotate. The polypeptide is Dihydroorotase (Pyrococcus horikoshii (strain ATCC 700860 / DSM 12428 / JCM 9974 / NBRC 100139 / OT-3)).